The following is a 406-amino-acid chain: Cyclin-dependent kinase 4 homolog (406 aa).

The Protein kinase domain maps to 102 to 388 (TFLFQALGKG…ARGALSHPFL (287 aa)). ATP-binding positions include 108–116 (LGKGAYGNV) and lysine 131. Aspartate 233 serves as the catalytic Proton acceptor. Mg(2+) contacts are provided by asparagine 238 and aspartate 251.

The protein belongs to the protein kinase superfamily. CMGC Ser/Thr protein kinase family. CDC2/CDKX subfamily. Interacts with cyd-1; the interaction is likely involved in regulating cdk-4 activity. Requires Mg(2+) as cofactor.

The enzyme catalyses L-seryl-[protein] + ATP = O-phospho-L-seryl-[protein] + ADP + H(+). The catalysed reaction is L-threonyl-[protein] + ATP = O-phospho-L-threonyl-[protein] + ADP + H(+). Functionally, serine/threonine-protein kinase which, in association with cyclin D-like protein cyd-1, is required for the progression through the G1 phase of the cell cycle during postembryonic development by phosphorylating and inhibiting lin-35 and fzr-1. In complex with cyd-1, involved in sex determination during gonadogenesis by regulating the asymmetric division of the somatic gonadal precursor cell (SGP). This Caenorhabditis elegans protein is Cyclin-dependent kinase 4 homolog.